Consider the following 379-residue polypeptide: MGEALNVMESVRSIVFKESENLEGSATKIEGYDFNKGVNYAELFKSMASTGFQAANLGDAIQIVNQMLDWRLSHEQPMEDCSEEERDVAYRESVTCKIFLGFTSNLVSSGVRDTIRYLVQHRMVDVVVTTAGGIEEDLIKCLAPTYKGDFSLPGAVLRSKGLNRIGNLLVPNDNYCKFENWIIPIFDQMYEEQIKEKVLWTPSKVIARLAKEINDETSYLYWAYKNRIPVFCPGLTDGSLGDMLYFHSFKKGDPDNPDLNPGLIIDIVGDIRAMNSEAVHAGSRKTGMIILGGGLPKHHVCNANMMRNGADFAVYINTAQEFDGSDSGARPDEAVSWGKIRGGAKTVKVHCDATIAFPILVAETFAAKRKELSHIRCQV.

NAD(+) contacts are provided by residues 104-108 (SNLVS), 130-132 (TAG), Glu136, and Asp237. 135–136 (EE) is a binding site for spermidine. Position 242 (Asp242) interacts with spermidine. Gly293 contributes to the NAD(+) binding site. His298 contacts spermidine. NAD(+) is bound at residue 318 to 319 (TA). Residues 324-326 (GSD) and 333-339 (EAVSWGK) each bind spermidine. Lys339 acts as the Nucleophile in catalysis. Residue 352–353 (DA) participates in NAD(+) binding.

This sequence belongs to the deoxyhypusine synthase family. In terms of assembly, homotetramer. NAD(+) is required as a cofactor.

It carries out the reaction [eIF5A protein]-L-lysine + spermidine = [eIF5A protein]-deoxyhypusine + propane-1,3-diamine. It participates in protein modification; eIF5A hypusination. In terms of biological role, catalyzes the NAD-dependent oxidative cleavage of spermidine and the subsequent transfer of the butylamine moiety of spermidine to the epsilon-amino group of a specific lysine residue of the eIF-5A precursor protein to form the intermediate deoxyhypusine residue. Also able to produce homospermidine from putrescine. The polypeptide is Deoxyhypusine synthase (DHS1) (Nicotiana tabacum (Common tobacco)).